We begin with the raw amino-acid sequence, 740 residues long: Zn(2)-C6 fungal-type transcription factor mpsB (740 aa).

The zn(2)-C6 fungal-type DNA-binding region spans 25 to 46 (RLKCDRNQPCSTCSHRGLSFSC). The interval 625-645 (SISTPSHDQDDLDGEAATEAT) is disordered.

The protein resides in the nucleus. In terms of biological role, transcription factor; part of the gene cluster that mediates the biosynthesis of macrophasetins, 3-decalinoyltetramic acids (DTAs) which feature a tetramate (pyrrolidine-2,4-dione) unit connected to a decalin fragment and that have potent bioactivities. This Macrophomina phaseolina (strain MS6) (Charcoal rot fungus) protein is Zn(2)-C6 fungal-type transcription factor mpsB.